A 753-amino-acid chain; its full sequence is Catalase-peroxidase (753 aa).

A cross-link (tryptophyl-tyrosyl-methioninium (Trp-Tyr) (with M-269)) is located at residues tryptophan 91–tyrosine 243. Histidine 92 (proton acceptor) is an active-site residue. The tryptophyl-tyrosyl-methioninium (Tyr-Met) (with W-91) cross-link spans tyrosine 243–methionine 269. A heme b-binding site is contributed by histidine 284.

Belongs to the peroxidase family. Peroxidase/catalase subfamily. As to quaternary structure, homodimer or homotetramer. Requires heme b as cofactor. Post-translationally, formation of the three residue Trp-Tyr-Met cross-link is important for the catalase, but not the peroxidase activity of the enzyme.

The enzyme catalyses H2O2 + AH2 = A + 2 H2O. It catalyses the reaction 2 H2O2 = O2 + 2 H2O. Functionally, bifunctional enzyme with both catalase and broad-spectrum peroxidase activity. This Paraburkholderia xenovorans (strain LB400) protein is Catalase-peroxidase.